A 190-amino-acid polypeptide reads, in one-letter code: MASRPISFVTGNAKKLEEVRAILGAAFPREIVAVKLDLPELQGEVDDICRKKCLEAARNVKGPVLVEDTCLCFNALKGLPGPYIKWFLEKLGPEGLHKLLDGWEDKSAQAVCTFAYAPDEQGEVLLFQGRTEGDIVFPRGSRDFGWDPIFQPKGYDKTYAELPKERKNEISHRFRALDKLREYFGGEGGK.

ITP is bound at residue Thr10–Lys15. Position 40 (Glu40) interacts with Mg(2+). Residues Lys52, Asp68 to Thr69, Lys85, Phe144 to Asp147, Lys167, and His172 to Arg173 each bind ITP.

It belongs to the HAM1 NTPase family. As to quaternary structure, homodimer. Requires Mg(2+) as cofactor. Mn(2+) serves as cofactor.

The protein localises to the cytoplasm. It carries out the reaction ITP + H2O = IMP + diphosphate + H(+). It catalyses the reaction dITP + H2O = dIMP + diphosphate + H(+). The enzyme catalyses XTP + H2O = XMP + diphosphate + H(+). Functionally, pyrophosphatase that hydrolyzes non-canonical purine nucleotides such as inosine triphosphate (ITP), deoxyinosine triphosphate (dITP) or xanthosine 5'-triphosphate (XTP) to their respective monophosphate derivatives. The enzyme does not distinguish between the deoxy- and ribose forms. Probably excludes non-canonical purines from RNA and DNA precursor pools, thus preventing their incorporation into RNA and DNA and avoiding chromosomal lesions. The polypeptide is Inosine triphosphate pyrophosphatase (Culex quinquefasciatus (Southern house mosquito)).